We begin with the raw amino-acid sequence, 346 residues long: E3 ubiquitin-protein ligase ARK2C (346 aa).

Disordered regions lie at residues 23–76 (PFQR…QHSG) and 267–288 (PHKYKKRRPQDGKGKKDEGEES). A ubiquitin binding region spans residues 266 to 268 (FPH). Over residues 275 to 284 (PQDGKGKKDE) the composition is skewed to basic and acidic residues. Positions 294 and 297 each coordinate Zn(2+). The RING-type; atypical zinc finger occupies 294 to 335 (CTICLSMLEDGEDVRRLPCMHLFHQLCVDQWLAMSKKCPICR). The segment at 309–313 (RLPCM) is ubiquitin binding. 2 residues coordinate Zn(2+): His-317 and Cys-320.

This sequence belongs to the Arkadia family. As to quaternary structure, monomer; binding to the ubiquitin-conjugating enzyme E2 does not trigger homodimerization.

The protein localises to the nucleus. It catalyses the reaction S-ubiquitinyl-[E2 ubiquitin-conjugating enzyme]-L-cysteine + [acceptor protein]-L-lysine = [E2 ubiquitin-conjugating enzyme]-L-cysteine + N(6)-ubiquitinyl-[acceptor protein]-L-lysine.. With respect to regulation, binds free ubiquitin non-covalently via its RING-type zinc finger. Ubiquitin-binding leads to enhance the E3 ubiquitin-protein ligase activity by stabilizing the ubiquitin-conjugating enzyme E2 (donor ubiquitin) in the 'closed' conformation and activating ubiquitin transfer. Its function is as follows. E3 ubiquitin-protein ligase that acts as a regulator of motor axon elongation. Required for efficient motor axon extension in the dorsal forelimb by enhancing the transcriptional responses of the SMAD1/SMAD5/SMAD8 effectors, which are activated downstream of BMP. Acts by mediating ubiquitination and degradation of SMAD inhibitors such as SMAD6, SMAD7, SKI and SNON isoform of SKIL. This is E3 ubiquitin-protein ligase ARK2C from Homo sapiens (Human).